The primary structure comprises 136 residues: Urease subunit beta (136 aa).

The segment at 112 to 136 (ENDEYAGVFGDNGTENVNKKGGKRS) is disordered.

It belongs to the urease beta subunit family. As to quaternary structure, heterotrimer of UreA (gamma), UreB (beta) and UreC (alpha) subunits. Three heterotrimers associate to form the active enzyme.

The protein resides in the cytoplasm. The enzyme catalyses urea + 2 H2O + H(+) = hydrogencarbonate + 2 NH4(+). The protein operates within nitrogen metabolism; urea degradation; CO(2) and NH(3) from urea (urease route): step 1/1. This is Urease subunit beta from Staphylococcus aureus (strain MRSA252).